A 128-amino-acid chain; its full sequence is EPIDERMAL PATTERNING FACTOR-like protein 2 (128 aa).

An N-terminal signal peptide occupies residues 1–28 (MVWSSNMSSFLLILLILNSTHFSLMANG). Intrachain disulfides connect Cys60–Cys119, Cys65–Cys71, and Cys68–Cys121. The segment covering 79 to 90 (NPQTKLHSPLTT) has biased composition (polar residues). Positions 79–100 (NPQTKLHSPLTTSSSSSSETIH) are disordered.

This sequence belongs to the plant cysteine rich small secretory peptide family. Epidermal patterning factor subfamily.

Its subcellular location is the secreted. Its function is as follows. Controls stomatal patterning. This Arabidopsis thaliana (Mouse-ear cress) protein is EPIDERMAL PATTERNING FACTOR-like protein 2.